The primary structure comprises 138 residues: Cysteine desulfuration protein SufE (138 aa).

C51 serves as the catalytic Cysteine persulfide intermediate.

Belongs to the SufE family. In terms of assembly, homodimer. Interacts with SufS.

It localises to the cytoplasm. Its pathway is cofactor biosynthesis; iron-sulfur cluster biosynthesis. Participates in cysteine desulfuration mediated by SufS. Cysteine desulfuration mobilizes sulfur from L-cysteine to yield L-alanine and constitutes an essential step in sulfur metabolism for biosynthesis of a variety of sulfur-containing biomolecules. Functions as a sulfur acceptor for SufS, by mediating the direct transfer of the sulfur atom from the S-sulfanylcysteine of SufS, an intermediate product of cysteine desulfuration process. This is Cysteine desulfuration protein SufE from Escherichia coli O157:H7.